A 118-amino-acid chain; its full sequence is MHSNAFFNLIACVLFPTPLIPSMVISIPRMINKWVKRVQFLTFLTNLFLYNIVQHYINRIRCYSFIKYLLLYNLYRPIFGRSLQMAITKIKIISDATAAVLLKSCAAMYDVLIDKKFK.

Transmembrane regions (helical) follow at residues Ala-5–Ile-25 and Phe-40–Ile-57.

Its subcellular location is the membrane. This is an uncharacterized protein from African swine fever virus (strain Badajoz 1971 Vero-adapted) (Ba71V).